Reading from the N-terminus, the 648-residue chain is Dystrotelin (648 aa).

The segment at 223–279 adopts a ZZ-type zinc-finger fold; the sequence is QHRVHCHACKAFPITGLRYRCLKCLNVHLCQSCFLTERRSRKHKPSHSVLEYCTQPS. Residues Cys-228, Cys-231, Cys-243, Cys-246, Cys-252, Cys-255, His-265, and His-269 each contribute to the Zn(2+) site. Positions 367-446 form a coiled coil; it reads QRETAELQKD…LDTVRHLLSL (80 aa). Polar residues predominate over residues 455-474; it reads SHSNLQLEQDGSINENNWTQ. Disordered regions lie at residues 455 to 509 and 536 to 557; these read SHSN…DTLY and QREE…EGLP. The span at 479 to 502 shows a compositional bias: basic and acidic residues; sequence KPHESSSTEHEVEERGTRQERRFE. The segment covering 538–548 has biased composition (acidic residues); sequence EEEELQEEEEG.

It localises to the cell membrane. The polypeptide is Dystrotelin (dytn) (Danio rerio (Zebrafish)).